Consider the following 337-residue polypeptide: GTPase Obg (337 aa).

The 158-residue stretch at 1–158 folds into the Obg domain; that stretch reads MFVDRVIIEL…HHIELELKLI (158 aa). The OBG-type G domain occupies 159–330; sequence ADVGLVGFPN…LIEKMTQRLS (172 aa). Residues 165–172, 190–194, 212–215, 282–285, and 311–313 contribute to the GTP site; these read GFPNAGKS, FTTLQ, DIPG, NKID, and SAV. Mg(2+) contacts are provided by Ser-172 and Thr-192.

This sequence belongs to the TRAFAC class OBG-HflX-like GTPase superfamily. OBG GTPase family. As to quaternary structure, monomer. Mg(2+) is required as a cofactor.

The protein resides in the cytoplasm. Functionally, an essential GTPase which binds GTP, GDP and possibly (p)ppGpp with moderate affinity, with high nucleotide exchange rates and a fairly low GTP hydrolysis rate. Plays a role in control of the cell cycle, stress response, ribosome biogenesis and in those bacteria that undergo differentiation, in morphogenesis control. This chain is GTPase Obg, found in Protochlamydia amoebophila (strain UWE25).